The sequence spans 422 residues: 5-hydroxytryptamine receptor 1A (422 aa).

The Extracellular segment spans residues 1 to 38 (MDVFSFGQGNNTTASQEPFGTGGNVTSISDVTFSYQVI). N10, N11, and N24 each carry an N-linked (GlcNAc...) asparagine glycan. Residues 39-59 (TSLLLGTLIFCAVLGNACVVA) traverse the membrane as a helical segment. Residues 60–73 (AIALERSLQNVANY) lie on the Cytoplasmic side of the membrane. The helical transmembrane segment at 74-98 (LIGSLAVTDLMVSVLVLPMAALYQV) threads the bilayer. Residues 99–107 (LNKWTLGQV) lie on the Extracellular side of the membrane. Residues 108–132 (TCDLFIALDVLCCTSSILHLCAIAL) traverse the membrane as a helical segment. C109 and C187 are oxidised to a cystine. D116 and C120 together coordinate serotonin. A DRY motif; important for ligand-induced conformation changes motif is present at residues 133 to 135 (DRY). Residues 133–152 (DRYWAITDPIDYVNKRTPRR) are Cytoplasmic-facing. The helical transmembrane segment at 153 to 174 (AAALISLTWLIGFLISIPPMLG) threads the bilayer. Residues 175–193 (WRTPEDRSDPDACTISKDH) lie on the Extracellular side of the membrane. The chain crosses the membrane as a helical span at residues 194 to 216 (GYTIYSTFGAFYIPLLLMLVLYG). At 217 to 346 (RIFRAARFRI…LARERKTVKT (130 aa)) the chain is on the cytoplasmic side. The segment at 235 to 261 (KKGAGTSLGTSSAPPPKKSLNGQPGSG) is disordered. Positions 345, 346, and 352 each coordinate 1D-myo-inositol 4-phosphate. Residues 347–370 (LGIIMGTFILCWLPFFIVALVLPF) traverse the membrane as a helical segment. The Extracellular segment spans residues 371-378 (CESSCHMP). Residues 379–403 (ALLGAIINWLGYSNSLLNPVIYAYF) form a helical membrane-spanning segment. The NPxxY motif; important for ligand-induced conformation changes and signaling motif lies at 396 to 400 (NPVIY). Residues F403, N404, and K405 each contribute to the 1D-myo-inositol 4-phosphate site. The Cytoplasmic segment spans residues 404 to 422 (NKDFQNAFKKIIKCKFCRR).

The protein belongs to the G-protein coupled receptor 1 family. 5-hydroxytryptamine receptor subfamily. HTR1A sub-subfamily. Heterodimer; heterodimerizes with GPER1. Interacts with YIF1B. Interacts with GPR39 and GALR1. Detected in hypothalamus, mesencephalon, amygdala, medulla, thalamus, septum and hippocampus.

Its subcellular location is the cell membrane. It localises to the cell projection. The protein resides in the dendrite. With respect to regulation, G-protein coupled receptor activity is regulated by lipids: phosphatidylinositol 4-phosphate increases HTR1A-mediated activity. In terms of biological role, G-protein coupled receptor for 5-hydroxytryptamine (serotonin). Also functions as a receptor for various drugs and psychoactive substances. Ligand binding causes a conformation change that triggers signaling via guanine nucleotide-binding proteins (G proteins) and modulates the activity of downstream effectors, such as adenylate cyclase. HTR1A is coupled to G(i)/G(o) G alpha proteins and mediates inhibitory neurotransmission: signaling inhibits adenylate cyclase activity and activates a phosphatidylinositol-calcium second messenger system that regulates the release of Ca(2+) ions from intracellular stores. Beta-arrestin family members regulate signaling by mediating both receptor desensitization and resensitization processes. This Rattus norvegicus (Rat) protein is 5-hydroxytryptamine receptor 1A.